We begin with the raw amino-acid sequence, 299 residues long: MSLDSNSDTEFELVPKFQTQPTRGDAPKSPELEEVSTVSDLQDELKSLRLENKDLYSLMEQLKKDNDEMKKSLEKVMKNQAELGELEEIRAIEDDKRSEKLATELVAIRADCSSLNRSERECRYDIERIFAKLEEESFFSLHENPIQRTISGTWKVIKISNFDEFFAAQDISQFHALIIKNQCLYFKVNKHQVKTQSYHERSWKPRAREEIHYFNFPNSLGELYSVEKNKLILTVTQEENDKKKVISRVERSVVDGQMKEIWERNGVICERIFKKIPDQRDSRAYPRSIYGSESQNIYY.

Positions 1–38 (MSLDSNSDTEFELVPKFQTQPTRGDAPKSPELEEVSTV) are disordered.

Belongs to the calycin superfamily. Fatty-acid binding protein (FABP) family.

This is an uncharacterized protein from Caenorhabditis elegans.